A 159-amino-acid chain; its full sequence is 3-hydroxyacyl-[acyl-carrier-protein] dehydratase FabZ (159 aa).

His58 is a catalytic residue.

It belongs to the thioester dehydratase family. FabZ subfamily.

It is found in the cytoplasm. It carries out the reaction a (3R)-hydroxyacyl-[ACP] = a (2E)-enoyl-[ACP] + H2O. Functionally, involved in unsaturated fatty acids biosynthesis. Catalyzes the dehydration of short chain beta-hydroxyacyl-ACPs and long chain saturated and unsaturated beta-hydroxyacyl-ACPs. The polypeptide is 3-hydroxyacyl-[acyl-carrier-protein] dehydratase FabZ (Helicobacter pylori (strain P12)).